A 268-amino-acid chain; its full sequence is 3-methyl-2-oxobutanoate hydroxymethyltransferase (268 aa).

Residues Asp44 and Asp83 each coordinate Mg(2+). Residues 44 to 45 (DS), Asp83, and Lys113 each bind 3-methyl-2-oxobutanoate. Glu115 contributes to the Mg(2+) binding site. The Proton acceptor role is filled by Glu182.

Belongs to the PanB family. In terms of assembly, homodecamer; pentamer of dimers. Mg(2+) serves as cofactor.

It localises to the cytoplasm. It catalyses the reaction 3-methyl-2-oxobutanoate + (6R)-5,10-methylene-5,6,7,8-tetrahydrofolate + H2O = 2-dehydropantoate + (6S)-5,6,7,8-tetrahydrofolate. It participates in cofactor biosynthesis; (R)-pantothenate biosynthesis; (R)-pantoate from 3-methyl-2-oxobutanoate: step 1/2. Functionally, catalyzes the reversible reaction in which hydroxymethyl group from 5,10-methylenetetrahydrofolate is transferred onto alpha-ketoisovalerate to form ketopantoate. This is 3-methyl-2-oxobutanoate hydroxymethyltransferase from Synechococcus elongatus (strain ATCC 33912 / PCC 7942 / FACHB-805) (Anacystis nidulans R2).